Here is a 389-residue protein sequence, read N- to C-terminus: Phosphoglycerate kinase (389 aa).

Substrate contacts are provided by residues 19-21 (DYN), R34, 57-60 (HLGR), R117, and R150. Residues K200, G288, E319, and 347–350 (GGDS) each bind ATP.

The protein belongs to the phosphoglycerate kinase family. As to quaternary structure, monomer.

Its subcellular location is the cytoplasm. It carries out the reaction (2R)-3-phosphoglycerate + ATP = (2R)-3-phospho-glyceroyl phosphate + ADP. It functions in the pathway carbohydrate degradation; glycolysis; pyruvate from D-glyceraldehyde 3-phosphate: step 2/5. In Deinococcus geothermalis (strain DSM 11300 / CIP 105573 / AG-3a), this protein is Phosphoglycerate kinase.